The chain runs to 269 residues: Putative hydro-lyase RL2444 (269 aa).

The protein belongs to the D-glutamate cyclase family.

The sequence is that of Putative hydro-lyase RL2444 from Rhizobium johnstonii (strain DSM 114642 / LMG 32736 / 3841) (Rhizobium leguminosarum bv. viciae).